The chain runs to 365 residues: 4-hydroxy-tetrahydrodipicolinate synthase 1, chloroplastic (365 aa).

The N-terminal 39 residues, 1–39 (MSALKNYGLISIDSALHFPRSNQLQSYKRRNAKWVSPIA), are a transit peptide targeting the chloroplast. Residue Thr-108 participates in pyruvate binding. Tyr-194 serves as the catalytic Proton donor/acceptor. Catalysis depends on Lys-222, which acts as the Schiff-base intermediate with substrate. Ile-261 contributes to the pyruvate binding site.

This sequence belongs to the DapA family.

Its subcellular location is the plastid. It is found in the chloroplast. The enzyme catalyses L-aspartate 4-semialdehyde + pyruvate = (2S,4S)-4-hydroxy-2,3,4,5-tetrahydrodipicolinate + H2O + H(+). Its pathway is amino-acid biosynthesis; L-lysine biosynthesis via DAP pathway; (S)-tetrahydrodipicolinate from L-aspartate: step 3/4. Its function is as follows. Catalyzes the condensation of (S)-aspartate-beta-semialdehyde [(S)-ASA] and pyruvate to 4-hydroxy-tetrahydrodipicolinate (HTPA). The chain is 4-hydroxy-tetrahydrodipicolinate synthase 1, chloroplastic (DHDPS1) from Arabidopsis thaliana (Mouse-ear cress).